The chain runs to 352 residues: MGDWEFLEKLLDQVQEHSTSIGKIWLMVLFIFRILILGLAGESVWGDEQSDFICNTEQPGCTNVCYDKAFPISHVRYWVLQFLFVSTPTLFYLGHVIYLSRREEKLKQKESELRALDDKEQVEQAIAIIEKKKMKLYIQEDGTVKIKGALMCTYLTSVIFKSLFEAGFLLGQWYLYGFVMTPIYVCERVPCPHKVDCFVSRPMEKTIFIVFMLVVSLISLFLNVLELIHLVCKSMIDTLKKYSPYVPPNRYPKNEDTYPEKTSETATAPFQDKSYIYLPMNDNISYPQYKMPNEQNWANFNTEHQLAISGNNQSPLGHYSLSAFVPVPPKTHSTMEKPSTRASSSASKKQYV.

Residues 2-23 (GDWEFLEKLLDQVQEHSTSIGK) lie on the Cytoplasmic side of the membrane. A helical transmembrane segment spans residues 24-46 (IWLMVLFIFRILILGLAGESVWG). Residues 47–76 (DEQSDFICNTEQPGCTNVCYDKAFPISHVR) lie on the Extracellular side of the membrane. A helical transmembrane segment spans residues 77 to 99 (YWVLQFLFVSTPTLFYLGHVIYL). The Cytoplasmic portion of the chain corresponds to 100-153 (SRREEKLKQKESELRALDDKEQVEQAIAIIEKKKMKLYIQEDGTVKIKGALMCT). Residues 154 to 176 (YLTSVIFKSLFEAGFLLGQWYLY) traverse the membrane as a helical segment. Topologically, residues 177 to 208 (GFVMTPIYVCERVPCPHKVDCFVSRPMEKTIF) are extracellular. A helical transmembrane segment spans residues 209–231 (IVFMLVVSLISLFLNVLELIHLV). Residues 232–352 (CKSMIDTLKK…SSSASKKQYV (121 aa)) are Cytoplasmic-facing. The interval 330 to 352 (KTHSTMEKPSTRASSSASKKQYV) is disordered. A compositionally biased stretch (polar residues) spans 340–352 (TRASSSASKKQYV).

It belongs to the connexin family. Alpha-type (group II) subfamily. A connexon is composed of a hexamer of connexins.

It is found in the cell membrane. The protein resides in the cell junction. The protein localises to the gap junction. In terms of biological role, one gap junction consists of a cluster of closely packed pairs of transmembrane channels, the connexons, through which materials of low MW diffuse from one cell to a neighboring cell. This chain is Gap junction alpha-4 protein (gja4), found in Xenopus tropicalis (Western clawed frog).